We begin with the raw amino-acid sequence, 132 residues long: Fatty acid-binding protein, brain (132 aa).

Residue V2 is modified to N-acetylvaline. 127–129 (RHY) lines the a fatty acid pocket.

The protein belongs to the calycin superfamily. Fatty-acid binding protein (FABP) family. As to expression, expressed in brain and other neural tissues.

Its subcellular location is the cytoplasm. Functionally, B-FABP could be involved in the transport of a so far unknown hydrophobic ligand with potential morphogenic activity during CNS development. It is required for the establishment of the radial glial fiber system in developing brain, a system that is necessary for the migration of immature neurons to establish cortical layers. The chain is Fatty acid-binding protein, brain (FABP7) from Homo sapiens (Human).